The following is a 325-amino-acid chain: Secreted RxLR effector protein RXLR-C07 (325 aa).

Residues Met-1–Ala-19 form the signal peptide. 5 TPR repeats span residues Arg-37–Arg-75, Ala-92–Ile-125, Gly-134–Gly-167, Ala-218–Arg-251, and Ala-260–Ile-293. The short motif at Arg-37 to Arg-75 is the RxLR-dEER element.

This sequence belongs to the RxLR effector family.

Its subcellular location is the secreted. The protein localises to the host cytoplasm. The protein resides in the host nucleus. It is found in the host nucleolus. Its function is as follows. Secreted effector that suppresses pattern-triggered immunity (PTI) in plant host. This is Secreted RxLR effector protein RXLR-C07 from Plasmopara halstedii (Downy mildew of sunflower).